Reading from the N-terminus, the 325-residue chain is MAAAAATLRGAMVGPRGAGLPGARARGLLCGARPGQLPLRTPQAVSLSSKSGLSRGRKVILSALGMLAAGGAGLAVALHSAVSASDLELHPPSYPWSHRGLLSSLDHTSIRRGFQVYKQVCSSCHSMDYVAYRHLVGVCYTEDEAKALAEEVEVQDGPNEDGEMFMRPGKLSDYFPKPYPNPEAARAANNGALPPDLSYIVRARHGGEDYVFSLLTGYCEPPTGVSLREGLYFNPYFPGQAIGMAPPIYNEVLEFDDGTPATMSQVAKDVCTFLRWAAEPEHDHRKRMGLKMLLMMGLLLPLVYAMKRHKWSVLKSRKLAYRPPK.

The N-terminal 84 residues, 1–84, are a transit peptide targeting the mitochondrion; sequence MAAAAATLRG…AVALHSAVSA (84 aa). The Mitochondrial intermembrane segment spans residues 85 to 281; it reads SDLELHPPSY…TFLRWAAEPE (197 aa). A Cytochrome c domain is found at 108–209; sequence TSIRRGFQVY…IVRARHGGED (102 aa). Heme c contacts are provided by cysteine 121, cysteine 124, histidine 125, and methionine 244. Residues 282–315 form a helical membrane-spanning segment; the sequence is HDHRKRMGLKMLLMMGLLLPLVYAMKRHKWSVLK. At 316–325 the chain is on the mitochondrial matrix side; the sequence is SRKLAYRPPK.

Belongs to the cytochrome c family. As to quaternary structure, component of the ubiquinol-cytochrome c oxidoreductase (cytochrome b-c1 complex, complex III, CIII), a multisubunit enzyme composed of 11 subunits. The complex is composed of 3 respiratory subunits cytochrome b, cytochrome c1 and Rieske protein UQCRFS1, 2 core protein subunits UQCRC1/QCR1 and UQCRC2/QCR2, and 6 low-molecular weight protein subunits UQCRH/QCR6, UQCRB/QCR7, UQCRQ/QCR8, UQCR10/QCR9, UQCR11/QCR10 and subunit 9, the cleavage product of Rieske protein UQCRFS1. The complex exists as an obligatory dimer and forms supercomplexes (SCs) in the inner mitochondrial membrane with NADH-ubiquinone oxidoreductase (complex I, CI) and cytochrome c oxidase (complex IV, CIV), resulting in different assemblies (supercomplex SCI(1)III(2)IV(1) and megacomplex MCI(2)III(2)IV(2)). Interacts with FLVCR2; this interaction occurs in the absence of heme and is disrupted upon heme binding. Requires heme c as cofactor.

It localises to the mitochondrion inner membrane. The enzyme catalyses a quinol + 2 Fe(III)-[cytochrome c](out) = a quinone + 2 Fe(II)-[cytochrome c](out) + 2 H(+)(out). Its function is as follows. Component of the ubiquinol-cytochrome c oxidoreductase, a multisubunit transmembrane complex that is part of the mitochondrial electron transport chain which drives oxidative phosphorylation. The respiratory chain contains 3 multisubunit complexes succinate dehydrogenase (complex II, CII), ubiquinol-cytochrome c oxidoreductase (cytochrome b-c1 complex, complex III, CIII) and cytochrome c oxidase (complex IV, CIV), that cooperate to transfer electrons derived from NADH and succinate to molecular oxygen, creating an electrochemical gradient over the inner membrane that drives transmembrane transport and the ATP synthase. The cytochrome b-c1 complex catalyzes electron transfer from ubiquinol to cytochrome c, linking this redox reaction to translocation of protons across the mitochondrial inner membrane, with protons being carried across the membrane as hydrogens on the quinol. In the process called Q cycle, 2 protons are consumed from the matrix, 4 protons are released into the intermembrane space and 2 electrons are passed to cytochrome c. Cytochrome c1 is a catalytic core subunit containing a c-type heme. It transfers electrons from the [2Fe-2S] iron-sulfur cluster of the Rieske protein to cytochrome c. The chain is Cytochrome c1, heme protein, mitochondrial (CYC1) from Bos taurus (Bovine).